We begin with the raw amino-acid sequence, 210 residues long: Ribosomal RNA small subunit methyltransferase G (210 aa).

Residues G76, L81, 127-128 (VE), and R142 each bind S-adenosyl-L-methionine.

This sequence belongs to the methyltransferase superfamily. RNA methyltransferase RsmG family.

It localises to the cytoplasm. It catalyses the reaction guanosine(527) in 16S rRNA + S-adenosyl-L-methionine = N(7)-methylguanosine(527) in 16S rRNA + S-adenosyl-L-homocysteine. In terms of biological role, specifically methylates the N7 position of guanine in position 527 of 16S rRNA. This chain is Ribosomal RNA small subunit methyltransferase G, found in Vibrio atlanticus (strain LGP32) (Vibrio splendidus (strain Mel32)).